Reading from the N-terminus, the 395-residue chain is Chalcone synthase (395 aa).

Cysteine 169 is an active-site residue.

The protein belongs to the thiolase-like superfamily. Chalcone/stilbene synthases family.

It catalyses the reaction (E)-4-coumaroyl-CoA + 3 malonyl-CoA + 3 H(+) = 2',4,4',6'-tetrahydroxychalcone + 3 CO2 + 4 CoA. It functions in the pathway secondary metabolite biosynthesis; flavonoid biosynthesis. In terms of biological role, the primary product of this enzyme is 4,2',4',6'-tetrahydroxychalcone (also termed naringenin-chalcone or chalcone) which can under specific conditions spontaneously isomerize into naringenin. This is Chalcone synthase (CHS) from Pinus strobus (Eastern white pine).